We begin with the raw amino-acid sequence, 822 residues long: Valine--tRNA ligase (822 aa).

Positions 41-51 match the 'HIGH' region motif; it reads PNVTGQLHLGH. The short motif at 511-515 is the 'KMSKS' region element; that stretch reads KMSKS. Residue Lys-514 coordinates ATP. Residues 765-822 adopt a coiled-coil conformation; sequence EQKGRELKEIQFLKSEILRAEKILTNKGFLEKAPREKIDLERTKLEKLKEKLVFYEKK.

This sequence belongs to the class-I aminoacyl-tRNA synthetase family. ValS type 1 subfamily. In terms of assembly, monomer.

The protein resides in the cytoplasm. The enzyme catalyses tRNA(Val) + L-valine + ATP = L-valyl-tRNA(Val) + AMP + diphosphate. Functionally, catalyzes the attachment of valine to tRNA(Val). As ValRS can inadvertently accommodate and process structurally similar amino acids such as threonine, to avoid such errors, it has a 'posttransfer' editing activity that hydrolyzes mischarged Thr-tRNA(Val) in a tRNA-dependent manner. This chain is Valine--tRNA ligase, found in Mesomycoplasma hyopneumoniae (strain J / ATCC 25934 / NCTC 10110) (Mycoplasma hyopneumoniae).